The primary structure comprises 598 residues: Elongation factor 4 (598 aa).

A tr-type G domain is found at 4 to 186; it reads SHIRNFAIIA…AIVSRLPAPS (183 aa). GTP contacts are provided by residues 16–21 and 133–136; these read DHGKST and NKID.

The protein belongs to the TRAFAC class translation factor GTPase superfamily. Classic translation factor GTPase family. LepA subfamily.

Its subcellular location is the cell inner membrane. It carries out the reaction GTP + H2O = GDP + phosphate + H(+). Its function is as follows. Required for accurate and efficient protein synthesis under certain stress conditions. May act as a fidelity factor of the translation reaction, by catalyzing a one-codon backward translocation of tRNAs on improperly translocated ribosomes. Back-translocation proceeds from a post-translocation (POST) complex to a pre-translocation (PRE) complex, thus giving elongation factor G a second chance to translocate the tRNAs correctly. Binds to ribosomes in a GTP-dependent manner. This chain is Elongation factor 4, found in Ehrlichia chaffeensis (strain ATCC CRL-10679 / Arkansas).